The chain runs to 1273 residues: Paired amphipathic helix protein Sin3a (1273 aa).

Disordered stretches follow at residues Met1–Ser23 and His87–Ala110. Phosphoserine is present on Ser10. One can recognise a PAH 1 domain in the interval Gln119–Gly189. Positions Gln119–Thr196 are interaction with HCFC1. Glycyl lysine isopeptide (Lys-Gly) (interchain with G-Cter in SUMO2) cross-links involve residues Lys122 and Lys134. A disordered region spans residues Pro205–Gln297. Residues Pro205–Tyr480 form an interaction with REST region. A compositionally biased stretch (low complexity) spans Ser228–Ala237. Residues Pro238 to Ala248 show a composition bias toward pro residues. Polar residues predominate over residues Lys252–Thr266. Over residues Pro267–Pro282 the composition is skewed to pro residues. Residue Ser277 is modified to Phosphoserine. The residue at position 284 (Thr284) is a Phosphothreonine. The segment covering Thr284–Gln297 has biased composition (polar residues). A PAH 2 domain is found at Gln300–Ala383. The disordered stretch occupies residues Asp398–Asn446. Residues Gln412–Cys425 are compositionally biased toward polar residues. Residues Ser456 to Lys525 enclose the PAH 3 domain. The segment at His458–Lys525 is interaction with SAP30. Position 469 is an N6-acetyllysine (Lys469). Positions Gly523 to Ala850 are interaction with NCOR1. Residues Tyr524 to Gly659 form an interaction with SUDS3 and SAP130 region. Lys563 participates in a covalent cross-link: Glycyl lysine isopeptide (Lys-Gly) (interchain with G-Cter in SUMO2). An interaction with HDAC1 and ARID4B region spans residues Asn687 to Gly829. 2 positions are modified to phosphoserine: Ser832 and Ser860. N6-acetyllysine occurs at positions 865 and 875. The segment at Val888 to Arg967 is interaction with OGT. Residues Cys903–Gly932 adopt a coiled-coil conformation. Ser940, Ser1089, and Ser1112 each carry phosphoserine. The segment at Cys1136–Met1156 is disordered. Positions Arg1138 to Met1156 are enriched in basic and acidic residues.

As to quaternary structure, interacts with ARID4B, BRMS1L, HCFC1, HDAC1, HDAC2, MXI1, SAP30L, SAP130, SFPQ and TOPORS. Interacts with OGT (via TPRs 1-6); the interaction mediates transcriptional repression in parallel with histone deacetylase. Interacts with BAZ2A, MXD1, MXD3, MXD4, MBD2, DACH1, NCOR1, NR4A2, REST, RLIM, SAP30, SETDB1, SMYD2, and SUDS3. Interacts with PHF12 in a complex composed of HDAC1, PHF12 and SAP30. Interacts with TET1; the interaction recruits SIN3A to gene promoters. The large PER complex involved in the histone deacetylation is composed of at least HDAC1, PER2, SFPQ and SIN3A. Interacts with KLF11. Interacts with PPHLN1. Found in a complex with YY1, GON4L and HDAC1. Interacts (via PAH2) with FOXK1. Interacts with FOXK2. Found in a complex composed of at least SINHCAF, SIN3A, HDAC1, SAP30, RBBP4, OGT and TET1. Interacts with SINHCAF. Interacts with SPHK2. SUMO1 sumoylated by TOPORS. Probably desumoylated by SENP2. Expressed in the developing brain, with highest levels of expression detected in the ventricular zone of various cortical regions.

The protein localises to the nucleus. It is found in the nucleolus. Its function is as follows. Acts as a transcriptional repressor. Corepressor for REST. Interacts with MXI1 to repress MYC responsive genes and antagonize MYC oncogenic activities. Also interacts with MXD1-MAX heterodimers to repress transcription by tethering SIN3A to DNA. Acts cooperatively with OGT to repress transcription in parallel with histone deacetylation. Involved in the control of the circadian rhythms. Required for the transcriptional repression of circadian target genes, such as PER1, mediated by the large PER complex through histone deacetylation. Cooperates with FOXK1 to regulate cell cycle progression probably by repressing cell cycle inhibitor genes expression. Required for cortical neuron differentiation and callosal axon elongation. The sequence is that of Paired amphipathic helix protein Sin3a from Homo sapiens (Human).